Here is a 307-residue protein sequence, read N- to C-terminus: Pantothenate kinase (307 aa).

90-97 serves as a coordination point for ATP; that stretch reads GSVAVGKS.

This sequence belongs to the prokaryotic pantothenate kinase family.

It localises to the cytoplasm. It catalyses the reaction (R)-pantothenate + ATP = (R)-4'-phosphopantothenate + ADP + H(+). The protein operates within cofactor biosynthesis; coenzyme A biosynthesis; CoA from (R)-pantothenate: step 1/5. This chain is Pantothenate kinase, found in Limosilactobacillus fermentum (strain NBRC 3956 / LMG 18251) (Lactobacillus fermentum).